Here is a 118-residue protein sequence, read N- to C-terminus: Fluoride-specific ion channel FluC 1 (118 aa).

Transmembrane regions (helical) follow at residues 1-21 (MIQC…RGFV) and 29-49 (FNTS…FCIG). The Na(+) site is built by Gly71 and Thr74. Residues 95–115 (LFILYSILQYGVSFVACLLGY) form a helical membrane-spanning segment.

This sequence belongs to the fluoride channel Fluc/FEX (TC 1.A.43) family.

Its subcellular location is the cell membrane. The enzyme catalyses fluoride(in) = fluoride(out). Na(+) is not transported, but it plays an essential structural role and its presence is essential for fluoride channel function. Functionally, fluoride-specific ion channel. Important for reducing fluoride concentration in the cell, thus reducing its toxicity. The polypeptide is Fluoride-specific ion channel FluC 1 (Staphylococcus saprophyticus subsp. saprophyticus (strain ATCC 15305 / DSM 20229 / NCIMB 8711 / NCTC 7292 / S-41)).